Consider the following 267-residue polypeptide: N-acetylgalactosamine permease IIC component 1 (267 aa).

Over 1–10 (MHEITLLQGL) the chain is Periplasmic. In terms of domain architecture, PTS EIIC type-4 spans 1–237 (MHEITLLQGL…VAVLGAGFAV (237 aa)). A helical transmembrane segment spans residues 11–31 (SLAALVFVLGIDFWLEALFLF). At 32–33 (RP) the chain is on the cytoplasmic side. Residues 34–54 (IIVCTLTGAILGDIQTGLITG) form a helical membrane-spanning segment. Residues 55 to 66 (GLTELAFAGLTP) are Periplasmic-facing. The chain crosses the membrane as a helical span at residues 67–87 (AGGVQPPNPIMAGLMTTVIAW). Residues 88–94 (STGVDAK) lie on the Cytoplasmic side of the membrane. Residues 95 to 115 (TAIGLGLPFSLLMQYVILFFY) form a helical membrane-spanning segment. At 116 to 141 (SAFSLFMTKADKCAKEADTAAFSRLN) the chain is on the periplasmic side. A helical membrane pass occupies residues 142 to 162 (WTTMLIVASAYAVIAFLCTYL). Residues 163-177 (AQGAMQALVKAMPAW) are Cytoplasmic-facing. Residues 178 to 198 (LTHGFEVAGGILPAVGFGLLL) traverse the membrane as a helical segment. At 199–209 (RVMFKAQYIPY) the chain is on the periplasmic side. The helical transmembrane segment at 210–230 (LIAGFLFVCYIQVSNLLPVAV) threads the bilayer. The Cytoplasmic segment spans residues 231 to 267 (LGAGFAVYEFFNAKSRQQAQPQPVASKNEEEDYSNGI).

It is found in the cell inner membrane. The phosphoenolpyruvate-dependent sugar phosphotransferase system (PTS), a major carbohydrate active -transport system, catalyzes the phosphorylation of incoming sugar substrates concomitant with their translocation across the cell membrane. This system is involved in N-acetylgalactosamine transport. The protein is N-acetylgalactosamine permease IIC component 1 (agaC) of Escherichia coli (strain K12).